The following is a 355-amino-acid chain: Glucose-6-phosphatase 2 (355 aa).

The Lumenal segment spans residues 1-24 (MDFLHRSGVLIIHHLQEDYRTYYG). A helical membrane pass occupies residues 25–45 (FLNFMSNVGDPRNIFSIYFPL). The Cytoplasmic segment spans residues 46–56 (WFQLNQNVGTK). The chain crosses the membrane as a helical span at residues 57–77 (MIWVAVIGDWFNLIFKWILFG). Over 78 to 115 (HRPYWWIQETEIYPNHSSPCLEQFPTTCETGPGSPSGH) the chain is Lumenal. Substrate is bound at residue R79. N-linked (GlcNAc...) asparagine glycosylation is present at N92. H115 serves as the catalytic Proton donor. Residues 116–136 (AMGSSCVWYVMVTAALSYTIS) form a helical membrane-spanning segment. Topologically, residues 137-146 (RMEESSVTLH) are cytoplasmic. Residues 147 to 167 (RLTWSFLWSVFWLIQISVCIS) form a helical membrane-spanning segment. Position 168 (R168) is a topological domain, lumenal. R168 is a substrate binding site. Residues 169–189 (VFIATHFPHQVILGVIGGMLV) form a helical membrane-spanning segment. H174 serves as the catalytic Nucleophile. Topologically, residues 190–211 (AEAFEHTPGVHMASLSVYLKTN) are cytoplasmic. The helical transmembrane segment at 212–232 (VFLFLFALGFYLLLRLFGIDL) threads the bilayer. The Lumenal portion of the chain corresponds to 233 to 252 (LWSVPIAKKWCANPDWIHID). Residues 253–273 (STPFAGLVRNLGVLFGLGFAI) form a helical membrane-spanning segment. The Cytoplasmic segment spans residues 274–290 (NSEMFLRSCQGENGTKP). Residues 291–307 (SFRLLCALTSLTTMQLY) traverse the membrane as a helical segment. Residues 308–318 (RFIKIPTHAEP) are Lumenal-facing. A helical membrane pass occupies residues 319–339 (LFYLLSFCKSASIPLMVVALI). Residues 340–355 (PYCVHMLMRPGDKKTK) lie on the Cytoplasmic side of the membrane. Positions 352 to 355 (KKTK) match the Prevents secretion from ER motif.

This sequence belongs to the glucose-6-phosphatase family. N-glycosylated; the non-glycosylated form is more unstable and is degraded through the proteasome. As to expression, specifically expressed in pancreatic islet cells, in particular those of beta-cell origin. Not detected in testis, kidney, muscle, liver, lung, spleen, brain, pituitary, gastric fundus or heart.

The protein resides in the endoplasmic reticulum membrane. It catalyses the reaction D-glucose 6-phosphate + H2O = D-glucose + phosphate. It functions in the pathway carbohydrate biosynthesis; gluconeogenesis. Its function is as follows. May hydrolyze glucose-6-phosphate to glucose in the endoplasmic reticulum. May be responsible for glucose production through glycogenolysis and gluconeogenesis. The sequence is that of Glucose-6-phosphatase 2 (G6pc2) from Mus musculus (Mouse).